The primary structure comprises 253 residues: MDVEVKKNKNEPYLKDHEVKDLIKRSQQGDQIARDTIVQKNMRLVWSVVQRFINRGYEPDDLFQIGCIGLLKSVDKFDLSYDVKFSTYAVPMIIGEIQRFIRDDGTVKVSRSLKEMSNKIRKAKDELSKLLGRVPTVAEVAEHLDLTPEEVVLAQEANRAPSSIHETVYENDGDPITLLDQIADHTEAKWFDKIALKEAIEELDEREKLIVYLRYYKDQTQSEVAARLGISQVQVSRLEKKILKQMKLHMNDT.

A Polymerase core binding motif is present at residues 61 to 74 (DLFQIGCIGLLKSV). The segment at residues 221 to 240 (QSEVAARLGISQVQVSRLEK) is a DNA-binding region (H-T-H motif).

The protein belongs to the sigma-70 factor family.

Functionally, sigma factors are initiation factors that promote the attachment of RNA polymerase to specific initiation sites and are then released. This sigma factor is responsible for the expression of sporulation specific genes. It is responsible for directing gene expression in the forespore compartment of developing cells of Bacillus. The chain is RNA polymerase sigma-F factor (sigF) from Priestia megaterium (Bacillus megaterium).